Consider the following 501-residue polypeptide: Glycerol kinase (501 aa).

Position 16 (Thr-16) interacts with ADP. Thr-16, Thr-17, and Ser-18 together coordinate ATP. Thr-16 serves as a coordination point for sn-glycerol 3-phosphate. Arg-20 is a binding site for ADP. Sn-glycerol 3-phosphate-binding residues include Arg-84, Glu-85, Tyr-135, and Asp-242. Glycerol is bound by residues Arg-84, Glu-85, Tyr-135, Asp-242, and Gln-243. Positions 264 and 307 each coordinate ADP. Positions 264, 307, 311, and 408 each coordinate ATP. Gly-408 is a binding site for ADP.

Belongs to the FGGY kinase family.

The enzyme catalyses glycerol + ATP = sn-glycerol 3-phosphate + ADP + H(+). The protein operates within polyol metabolism; glycerol degradation via glycerol kinase pathway; sn-glycerol 3-phosphate from glycerol: step 1/1. Key enzyme in the regulation of glycerol uptake and metabolism. Catalyzes the phosphorylation of glycerol to yield sn-glycerol 3-phosphate. In Saccharolobus islandicus (strain L.S.2.15 / Lassen #1) (Sulfolobus islandicus), this protein is Glycerol kinase.